We begin with the raw amino-acid sequence, 188 residues long: SAYSvFN domain-containing protein 1 (188 aa).

Residues 1–10 show a composition bias toward basic and acidic residues; the sequence is MEQRLAEFRE. 2 disordered regions span residues 1 to 43 and 60 to 80; these read MEQR…ATPK and AIAQ…PEST. The Cytoplasmic segment spans residues 1–100; it reads MEQRLAEFRE…SFLTNITFLK (100 aa). 2 stretches are compositionally biased toward low complexity: residues 22-43 and 60-75; these read STSS…ATPK and AIAQ…AGQQ. Residues 86 to 100 are middle helical (MH); that stretch reads SSCRQSFLTNITFLK. An intramembrane region (helical) is located at residues 101-121; sequence VLLWLVLLGLFVELEFGLAYF. The Cytoplasmic portion of the chain corresponds to 122–188; the sequence is VLSMFYWMYV…RTSPSCSSYP (67 aa).

This sequence belongs to the SAYSD1 family. In terms of assembly, associates (via N-terminus) with ribosomes. In terms of tissue distribution, enriched in testis; predominantly expressed in round and elongating spermatids.

Its subcellular location is the endoplasmic reticulum membrane. It is found in the cytoplasmic vesicle membrane. In terms of biological role, ufmylation 'reader' component of a translocation-associated quality control pathway, a mechanism that takes place when a ribosome has stalled during translation, and which is required to degrade clogged substrates. Specifically recognizes and binds ufmylated ribosomes when a ribosome has stalled, promoting the transport of stalled nascent chain via the TRAPP complex to lysosomes for degradation. In Mus musculus (Mouse), this protein is SAYSvFN domain-containing protein 1.